The primary structure comprises 316 residues: Cytochrome c biogenesis protein CcsA (316 aa).

7 helical membrane-spanning segments follow: residues 15–35 (FSIC…TTIL), 44–64 (GIIT…IYSG), 71–91 (LYES…VAYL), 142–162 (MILS…LLVI), 220–240 (VISL…VWAN), 247–267 (WSWD…AIYL), and 281–301 (AIVA…VNLL).

The protein belongs to the CcmF/CycK/Ccl1/NrfE/CcsA family. As to quaternary structure, may interact with Ccs1.

The protein localises to the plastid. The protein resides in the chloroplast thylakoid membrane. Functionally, required during biogenesis of c-type cytochromes (cytochrome c6 and cytochrome f) at the step of heme attachment. The polypeptide is Cytochrome c biogenesis protein CcsA (Trachelium caeruleum (Blue throatwort)).